The chain runs to 474 residues: uncharacterized protein (474 aa).

This is an uncharacterized protein from Magallana gigas (Pacific oyster).